Here is a 302-residue protein sequence, read N- to C-terminus: Pyridoxal 5'-phosphate synthase subunit PdxS (302 aa).

Residue Asp-32 coordinates D-ribose 5-phosphate. The Schiff-base intermediate with D-ribose 5-phosphate role is filled by Lys-89. Gly-161 provides a ligand contact to D-ribose 5-phosphate. Position 173 (Arg-173) interacts with D-glyceraldehyde 3-phosphate. D-ribose 5-phosphate is bound by residues Gly-222 and 243 to 244 (GS). The segment at 278 to 302 (GIGKGMKGQSNEDLPDEEKLQGRGV) is disordered.

The protein belongs to the PdxS/SNZ family. In the presence of PdxT, forms a dodecamer of heterodimers.

The enzyme catalyses aldehydo-D-ribose 5-phosphate + D-glyceraldehyde 3-phosphate + L-glutamine = pyridoxal 5'-phosphate + L-glutamate + phosphate + 3 H2O + H(+). It participates in cofactor biosynthesis; pyridoxal 5'-phosphate biosynthesis. Its function is as follows. Catalyzes the formation of pyridoxal 5'-phosphate from ribose 5-phosphate (RBP), glyceraldehyde 3-phosphate (G3P) and ammonia. The ammonia is provided by the PdxT subunit. Can also use ribulose 5-phosphate and dihydroxyacetone phosphate as substrates, resulting from enzyme-catalyzed isomerization of RBP and G3P, respectively. This is Pyridoxal 5'-phosphate synthase subunit PdxS from Halorubrum lacusprofundi (strain ATCC 49239 / DSM 5036 / JCM 8891 / ACAM 34).